The following is a 145-amino-acid chain: Protein AggB (145 aa).

An N-terminal signal peptide occupies residues 1 to 24 (MLKKSILPMSCGVLVMVMSGLLDA).

The protein to E.coli AfaD.

In Escherichia coli, this protein is Protein AggB (aggB).